Consider the following 342-residue polypeptide: Phosphoribosylformylglycinamidine cyclo-ligase (342 aa).

The protein belongs to the AIR synthase family.

Its subcellular location is the cytoplasm. The catalysed reaction is 2-formamido-N(1)-(5-O-phospho-beta-D-ribosyl)acetamidine + ATP = 5-amino-1-(5-phospho-beta-D-ribosyl)imidazole + ADP + phosphate + H(+). The protein operates within purine metabolism; IMP biosynthesis via de novo pathway; 5-amino-1-(5-phospho-D-ribosyl)imidazole from N(2)-formyl-N(1)-(5-phospho-D-ribosyl)glycinamide: step 2/2. The sequence is that of Phosphoribosylformylglycinamidine cyclo-ligase from Staphylococcus aureus (strain bovine RF122 / ET3-1).